The chain runs to 217 residues: Thiamine-phosphate synthase (217 aa).

4-amino-2-methyl-5-(diphosphooxymethyl)pyrimidine is bound by residues 45-49 and Asn-81; that span reads QFRQK. Mg(2+) is bound by residues Asp-82 and Asp-101. Ser-120 contacts 4-amino-2-methyl-5-(diphosphooxymethyl)pyrimidine. Residue 147–149 coordinates 2-[(2R,5Z)-2-carboxy-4-methylthiazol-5(2H)-ylidene]ethyl phosphate; it reads TPS. Lys-150 serves as a coordination point for 4-amino-2-methyl-5-(diphosphooxymethyl)pyrimidine. Residues Gly-179 and 197 to 198 contribute to the 2-[(2R,5Z)-2-carboxy-4-methylthiazol-5(2H)-ylidene]ethyl phosphate site; that span reads IS.

It belongs to the thiamine-phosphate synthase family. Mg(2+) serves as cofactor.

The catalysed reaction is 2-[(2R,5Z)-2-carboxy-4-methylthiazol-5(2H)-ylidene]ethyl phosphate + 4-amino-2-methyl-5-(diphosphooxymethyl)pyrimidine + 2 H(+) = thiamine phosphate + CO2 + diphosphate. It carries out the reaction 2-(2-carboxy-4-methylthiazol-5-yl)ethyl phosphate + 4-amino-2-methyl-5-(diphosphooxymethyl)pyrimidine + 2 H(+) = thiamine phosphate + CO2 + diphosphate. It catalyses the reaction 4-methyl-5-(2-phosphooxyethyl)-thiazole + 4-amino-2-methyl-5-(diphosphooxymethyl)pyrimidine + H(+) = thiamine phosphate + diphosphate. It functions in the pathway cofactor biosynthesis; thiamine diphosphate biosynthesis; thiamine phosphate from 4-amino-2-methyl-5-diphosphomethylpyrimidine and 4-methyl-5-(2-phosphoethyl)-thiazole: step 1/1. Its function is as follows. Condenses 4-methyl-5-(beta-hydroxyethyl)thiazole monophosphate (THZ-P) and 2-methyl-4-amino-5-hydroxymethyl pyrimidine pyrophosphate (HMP-PP) to form thiamine monophosphate (TMP). The chain is Thiamine-phosphate synthase from Helicobacter pylori (strain J99 / ATCC 700824) (Campylobacter pylori J99).